The following is a 393-amino-acid chain: MTVPATRQDLMIVNMGPHHPSMHGVLRLIVTLDGEDVIDCEPILGYLHRGMEKIAENRTIIQYLPYVTRWDYLATMFTEAITVNGPEQLGNIQIPKRASYIRVIMLELSRIASHLLWLGPFMADIGAQTPFFYIFRERELIYDLFEAATGMRMMHNYFRIGGVAADLPYGWIDKCLDFCDYFLTGIVEYEKLITQNPIFLERVERVGIISGEEAINWGLSGPMLRASGIEWDLRKVDNYECYNEFDWEVQWQKEGDSLARYLVRISEMKESIKIIQQALEGIPGGPYENLEVRRFDKVKDSEWNDFEYRFISKKPSPTFELAKQELYVRVEAPKGELGIFLIGDNSVFPWRWKIRPPGFINLQILPQLVKRMKLADIMTILGSIDIIMGEVDR.

This sequence belongs to the complex I 49 kDa subunit family. In terms of assembly, NDH is composed of at least 16 different subunits, 5 of which are encoded in the nucleus.

It localises to the plastid. It is found in the chloroplast thylakoid membrane. It carries out the reaction a plastoquinone + NADH + (n+1) H(+)(in) = a plastoquinol + NAD(+) + n H(+)(out). The catalysed reaction is a plastoquinone + NADPH + (n+1) H(+)(in) = a plastoquinol + NADP(+) + n H(+)(out). NDH shuttles electrons from NAD(P)H:plastoquinone, via FMN and iron-sulfur (Fe-S) centers, to quinones in the photosynthetic chain and possibly in a chloroplast respiratory chain. The immediate electron acceptor for the enzyme in this species is believed to be plastoquinone. Couples the redox reaction to proton translocation, and thus conserves the redox energy in a proton gradient. In Acorus calamus var. americanus (American sweet flag), this protein is NAD(P)H-quinone oxidoreductase subunit H, chloroplastic.